We begin with the raw amino-acid sequence, 1153 residues long: ATP-dependent helicase/deoxyribonuclease subunit B (1153 aa).

8-15 (GRAGSGKS) is a binding site for ATP. 4 residues coordinate [4Fe-4S] cluster: Cys786, Cys1104, Cys1107, and Cys1113.

Belongs to the helicase family. AddB/RexB type 1 subfamily. Heterodimer of AddA and AddB. It depends on Mg(2+) as a cofactor. The cofactor is [4Fe-4S] cluster.

Its function is as follows. The heterodimer acts as both an ATP-dependent DNA helicase and an ATP-dependent, dual-direction single-stranded exonuclease. Recognizes the chi site generating a DNA molecule suitable for the initiation of homologous recombination. The AddB subunit has 5' -&gt; 3' nuclease activity but not helicase activity. This chain is ATP-dependent helicase/deoxyribonuclease subunit B, found in Clostridium acetobutylicum (strain ATCC 824 / DSM 792 / JCM 1419 / IAM 19013 / LMG 5710 / NBRC 13948 / NRRL B-527 / VKM B-1787 / 2291 / W).